The following is a 261-amino-acid chain: Small ribosomal subunit protein uS2 (261 aa).

The disordered stretch occupies residues 223–261 (EGKQGQDDSEDVEKEMADKAAAEDDEEESIEVVVEKSED).

This sequence belongs to the universal ribosomal protein uS2 family.

This chain is Small ribosomal subunit protein uS2, found in Lactobacillus johnsonii (strain CNCM I-12250 / La1 / NCC 533).